The following is a 455-amino-acid chain: uncharacterized protein (455 aa).

A signal peptide spans 1–24 (MKTTKILLHTGVLALSLLATQVMA).

This is an uncharacterized protein from Pseudomonas aeruginosa (strain ATCC 15692 / DSM 22644 / CIP 104116 / JCM 14847 / LMG 12228 / 1C / PRS 101 / PAO1).